The chain runs to 148 residues: Protein Turandot Z (148 aa).

The signal sequence occupies residues methionine 1 to alanine 23.

This sequence belongs to the Turandot family.

Its subcellular location is the secreted. In terms of biological role, a humoral factor that may play a role in stress tolerance. The polypeptide is Protein Turandot Z (Drosophila simulans (Fruit fly)).